Consider the following 630-residue polypeptide: tRNA uridine 5-carboxymethylaminomethyl modification enzyme MnmG (630 aa).

Position 15–20 (15–20) interacts with FAD; that stretch reads GAGHAG. 276 to 290 serves as a coordination point for NAD(+); sequence GPRYCPSIEDKIVRF.

It belongs to the MnmG family. As to quaternary structure, homodimer. Heterotetramer of two MnmE and two MnmG subunits. It depends on FAD as a cofactor.

It is found in the cytoplasm. NAD-binding protein involved in the addition of a carboxymethylaminomethyl (cmnm) group at the wobble position (U34) of certain tRNAs, forming tRNA-cmnm(5)s(2)U34. This Latilactobacillus sakei subsp. sakei (strain 23K) (Lactobacillus sakei subsp. sakei) protein is tRNA uridine 5-carboxymethylaminomethyl modification enzyme MnmG.